The chain runs to 114 residues: Large ribosomal subunit protein uL18 (114 aa).

Belongs to the universal ribosomal protein uL18 family. As to quaternary structure, part of the 50S ribosomal subunit; part of the 5S rRNA/L5/L18/L25 subcomplex. Contacts the 5S and 23S rRNAs.

This is one of the proteins that bind and probably mediate the attachment of the 5S RNA into the large ribosomal subunit, where it forms part of the central protuberance. The protein is Large ribosomal subunit protein uL18 of Aster yellows phytoplasma.